The primary structure comprises 355 residues: Uroporphyrinogen decarboxylase (355 aa).

Substrate contacts are provided by residues 27-31 (RQAGR), Asp77, Tyr154, Thr209, and His327.

Belongs to the uroporphyrinogen decarboxylase family. As to quaternary structure, homodimer.

The protein localises to the cytoplasm. It catalyses the reaction uroporphyrinogen III + 4 H(+) = coproporphyrinogen III + 4 CO2. Its pathway is porphyrin-containing compound metabolism; protoporphyrin-IX biosynthesis; coproporphyrinogen-III from 5-aminolevulinate: step 4/4. Catalyzes the decarboxylation of four acetate groups of uroporphyrinogen-III to yield coproporphyrinogen-III. The polypeptide is Uroporphyrinogen decarboxylase (Yersinia enterocolitica serotype O:8 / biotype 1B (strain NCTC 13174 / 8081)).